A 520-amino-acid chain; its full sequence is Biotinidase (520 aa).

The first 21 residues, 1–21 (MSGARTAPALFFLGCSALALG), serve as a signal peptide directing secretion. The CN hydrolase domain occupies 49-333 (NPLELVSRQE…TGNTTSEMDP (285 aa)). The active-site Proton acceptor is glutamate 89. N-linked (GlcNAc...) asparagine glycans are attached at residues asparagine 96, asparagine 127, and asparagine 180. Lysine 189 acts as the Proton donor in catalysis. The active-site Nucleophile is cysteine 222. N-linked (GlcNAc...) asparagine glycans are attached at residues asparagine 326, asparagine 379, and asparagine 466.

The protein belongs to the carbon-nitrogen hydrolase superfamily. BTD/VNN family.

It localises to the secreted. The protein resides in the extracellular space. It catalyses the reaction biocytin + H2O = biotin + L-lysine. The catalysed reaction is biotin amide + H2O = biotin + NH4(+). Functionally, catalytic release of biotin from biocytin, the product of biotin-dependent carboxylases degradation. The polypeptide is Biotinidase (Btd) (Mus musculus (Mouse)).